The chain runs to 100 residues: MQLSPQEKDKLLIFTASLVAERRKARGLKLNYPEAVAYISAAILEGARDGRTVAELMNYGATLLSRDEVMEGVPEMLPEVQVEATFPDGTKLVTVHEPIR.

This sequence belongs to the urease gamma subunit family. In terms of assembly, heterotrimer of UreA (gamma), UreB (beta) and UreC (alpha) subunits. Three heterotrimers associate to form the active enzyme.

It is found in the cytoplasm. It carries out the reaction urea + 2 H2O + H(+) = hydrogencarbonate + 2 NH4(+). It functions in the pathway nitrogen metabolism; urea degradation; CO(2) and NH(3) from urea (urease route): step 1/1. The chain is Urease subunit gamma from Synechocystis sp. (strain ATCC 27184 / PCC 6803 / Kazusa).